The chain runs to 249 residues: FMN reductase (NADPH) (249 aa).

This sequence belongs to the flavin oxidoreductase frp family. In terms of assembly, homodimer.

It catalyses the reaction FMNH2 + NADP(+) = FMN + NADPH + 2 H(+). Reduces FMNH(2) to FMN, with NADPH as reductant. It also reduces nitroaromatic compounds, quinones and azo dyes. The protein is FMN reductase (NADPH) (nfrA1) of Bacillus subtilis (strain 168).